The following is a 203-amino-acid chain: Protein GrpE 2 (203 aa).

The segment covering 1 to 12 has biased composition (basic and acidic residues); it reads MPTRPQEPDRAA. The tract at residues 1–64 is disordered; it reads MPTRPQEPDR…APAEDEYTTA (64 aa). Residues 45-56 are compositionally biased toward low complexity; sequence GEPGPDAAGPAP.

Belongs to the GrpE family. In terms of assembly, homodimer.

It localises to the cytoplasm. In terms of biological role, participates actively in the response to hyperosmotic and heat shock by preventing the aggregation of stress-denatured proteins, in association with DnaK and GrpE. It is the nucleotide exchange factor for DnaK and may function as a thermosensor. Unfolded proteins bind initially to DnaJ; upon interaction with the DnaJ-bound protein, DnaK hydrolyzes its bound ATP, resulting in the formation of a stable complex. GrpE releases ADP from DnaK; ATP binding to DnaK triggers the release of the substrate protein, thus completing the reaction cycle. Several rounds of ATP-dependent interactions between DnaJ, DnaK and GrpE are required for fully efficient folding. In Streptomyces avermitilis (strain ATCC 31267 / DSM 46492 / JCM 5070 / NBRC 14893 / NCIMB 12804 / NRRL 8165 / MA-4680), this protein is Protein GrpE 2.